The primary structure comprises 805 residues: Na(+)/H(+) antiporter subunit A (805 aa).

A run of 21 helical transmembrane segments spans residues 4 to 22, 29 to 51, 80 to 102, 109 to 128, 132 to 154, 167 to 189, 209 to 231, 244 to 266, 271 to 293, 300 to 322, 332 to 354, 375 to 397, 431 to 453, 474 to 496, 529 to 551, 597 to 614, 629 to 651, 656 to 674, 679 to 701, 714 to 736, and 778 to 795; these read LHWA…PFLY, HTGW…YLSI, SLLF…IFYL, LNNF…GVVL, LIVL…SYWF, MLIT…VMTG, FLPA…PFHI, SAYL…LTPV, AEWF…TSAV, GILA…LGSA, PAFY…TFKG, LGGL…ASMA, IIIV…IMFF, IGML…FPNI, GFNA…FLMM, YFAY…YTMF, IAPY…PFIN, AVVV…FVVF, LALT…FYHL, NVLN…LSSL, and MLEV…IALI.

This sequence belongs to the CPA3 antiporters (TC 2.A.63) subunit A family. Forms a heterooligomeric complex that consists of seven subunits: MrpA, MrpB, MrpC, MrpD, MrpE, MrpF and MrpG.

It is found in the cell membrane. Its function is as follows. Mnh complex is a Na(+)Li(+)/H(+) antiporter involved in Na(+) and/or Li(+) excretion and Na(+) resistance. Na(+)/H(+) antiport consumes a transmembrane electrical potential, and is thus inferred to be electrogenic. Does not transport K(+), Ca(2+) or Mg(2+). The chain is Na(+)/H(+) antiporter subunit A (mrpA) from Alkalihalophilus pseudofirmus (strain ATCC BAA-2126 / JCM 17055 / OF4) (Bacillus pseudofirmus).